The primary structure comprises 447 residues: UMP-CMP kinase 2, mitochondrial (447 aa).

A mitochondrion-targeting transit peptide spans 1 to 73; it reads MALISRPRAP…ELLGPPGRSY (73 aa). 259–266 contacts ATP; the sequence is GLDATGKT. Residues 380-412 are a coiled coil; sequence EERVRRLQGRGQEKTKEEAELEANNVFRQKVEM.

Belongs to the thymidylate kinase family. Strongly expressed in the brain.

Its subcellular location is the mitochondrion. The catalysed reaction is CMP + ATP = CDP + ADP. It catalyses the reaction dCMP + ATP = dCDP + ADP. It carries out the reaction a 2'-deoxyribonucleoside 5'-diphosphate + ATP = a 2'-deoxyribonucleoside 5'-triphosphate + ADP. The enzyme catalyses a ribonucleoside 5'-diphosphate + ATP = a ribonucleoside 5'-triphosphate + ADP. Its function is as follows. Mitochondrial nucleotide monophosphate kinase needed for salvage dNTP synthesis that mediates immunomodulatory and antiviral activities through IFN-dependent and IFN-independent pathways. Restricts the replication of multiple viruses including flaviviruses or coronaviruses. Together with viperin/RSAD2 and ddhCTP, suppresses the replication of several coronaviruses through inhibition of the viral RNA-dependent RNA polymerase activities. Concerning flaviviruses, restricts RNA translation when localized to the mitochondria independently of its kinase activity. Is able to phosphorylate dUMP, dCMP, CMP, UMP and monophosphates of the pyrimidine nucleoside analogs ddC, dFdC, araC, BVDU and FdUrd with ATP as phosphate donor. Efficacy is highest for dUMP followed by dCMP while CMP and UMP are poor substrates. Controls therefore mitochondrial DNA synthesis by supplying required deoxyribonucleotides. CMPK2-dependent mitochondrial DNA synthesis is necessary for the production of oxidized mitochondrial DNA fragments after exposure to NLRP3 activators. In turn, cytosolic oxidized mtDNA associates with the NLRP3 inflammasome complex and is required for its activation. The sequence is that of UMP-CMP kinase 2, mitochondrial (Cmpk2) from Mus musculus (Mouse).